Reading from the N-terminus, the 462-residue chain is 3-isopropylmalate dehydratase large subunit (462 aa).

3 residues coordinate [4Fe-4S] cluster: C337, C397, and C400.

This sequence belongs to the aconitase/IPM isomerase family. LeuC type 1 subfamily. In terms of assembly, heterodimer of LeuC and LeuD. [4Fe-4S] cluster is required as a cofactor.

It catalyses the reaction (2R,3S)-3-isopropylmalate = (2S)-2-isopropylmalate. It functions in the pathway amino-acid biosynthesis; L-leucine biosynthesis; L-leucine from 3-methyl-2-oxobutanoate: step 2/4. Its function is as follows. Catalyzes the isomerization between 2-isopropylmalate and 3-isopropylmalate, via the formation of 2-isopropylmaleate. This is 3-isopropylmalate dehydratase large subunit from Listeria monocytogenes serovar 1/2a (strain ATCC BAA-679 / EGD-e).